A 319-amino-acid chain; its full sequence is Alpha-hemolysin (319 aa).

A signal peptide spans M1–A26.

This sequence belongs to the aerolysin family. Self-assembles to form first a non-lytic oligomeric intermediate and then, a mushroom-shaped homoheptamer structure of 100 Angstroms in length and up to 100 Angstroms in diameter.

It is found in the secreted. Its function is as follows. Alpha-toxin binds to the membrane of eukaryotic cells resulting in the release of low-molecular weight molecules and leading to an eventual osmotic lysis. Inhibits host neutrophil chemotaxis to the lesion region. Heptamer oligomerization and pore formation is required for lytic activity. The chain is Alpha-hemolysin (hly) from Staphylococcus aureus (strain NCTC 8325 / PS 47).